The primary structure comprises 58 residues: Small ribosomal subunit protein bS21 (58 aa).

It belongs to the bacterial ribosomal protein bS21 family.

The sequence is that of Small ribosomal subunit protein bS21 from Lacticaseibacillus paracasei (strain ATCC 334 / BCRC 17002 / CCUG 31169 / CIP 107868 / KCTC 3260 / NRRL B-441) (Lactobacillus paracasei).